The following is a 354-amino-acid chain: ATPase GET3 (354 aa).

26–33 (KGGVGKTT) is a binding site for ATP. Asp57 is an active-site residue. Residues Glu245 and Asn272 each coordinate ATP. Positions 285 and 288 each coordinate Zn(2+).

The protein belongs to the arsA ATPase family. In terms of assembly, homodimer. Component of the Golgi to ER traffic (GET) complex, which is composed of GET1, GET2 and GET3. Within the complex, GET1 and GET2 form a heterotetramer which is stabilized by phosphatidylinositol binding and which binds to the GET3 homodimer. Interacts with the chloride channel protein GEF1.

It is found in the cytoplasm. The protein localises to the endoplasmic reticulum. It localises to the golgi apparatus. ATPase required for the post-translational delivery of tail-anchored (TA) proteins to the endoplasmic reticulum. Recognizes and selectively binds the transmembrane domain of TA proteins in the cytosol. This complex then targets to the endoplasmic reticulum by membrane-bound receptors GET1 and GET2, where the tail-anchored protein is released for insertion. This process is regulated by ATP binding and hydrolysis. ATP binding drives the homodimer towards the closed dimer state, facilitating recognition of newly synthesized TA membrane proteins. ATP hydrolysis is required for insertion. Subsequently, the homodimer reverts towards the open dimer state, lowering its affinity for the GET1-GET2 receptor, and returning it to the cytosol to initiate a new round of targeting. Cooperates with the HDEL receptor ERD2 to mediate the ATP-dependent retrieval of resident ER proteins that contain a C-terminal H-D-E-L retention signal from the Golgi to the ER. Involved in low-level resistance to the oxyanions arsenite and arsenate, and in heat tolerance. This is ATPase GET3 from Saccharomyces cerevisiae (strain RM11-1a) (Baker's yeast).